Consider the following 225-residue polypeptide: Phosphoribosylformylglycinamidine synthase subunit PurQ (225 aa).

Positions 5–225 (SAVITFPGSN…ESVVRGLVEA (221 aa)) constitute a Glutamine amidotransferase type-1 domain. C89 (nucleophile) is an active-site residue. Catalysis depends on residues H197 and E199.

As to quaternary structure, part of the FGAM synthase complex composed of 1 PurL, 1 PurQ and 2 PurS subunits.

Its subcellular location is the cytoplasm. It carries out the reaction N(2)-formyl-N(1)-(5-phospho-beta-D-ribosyl)glycinamide + L-glutamine + ATP + H2O = 2-formamido-N(1)-(5-O-phospho-beta-D-ribosyl)acetamidine + L-glutamate + ADP + phosphate + H(+). The catalysed reaction is L-glutamine + H2O = L-glutamate + NH4(+). It participates in purine metabolism; IMP biosynthesis via de novo pathway; 5-amino-1-(5-phospho-D-ribosyl)imidazole from N(2)-formyl-N(1)-(5-phospho-D-ribosyl)glycinamide: step 1/2. Part of the phosphoribosylformylglycinamidine synthase complex involved in the purines biosynthetic pathway. Catalyzes the ATP-dependent conversion of formylglycinamide ribonucleotide (FGAR) and glutamine to yield formylglycinamidine ribonucleotide (FGAM) and glutamate. The FGAM synthase complex is composed of three subunits. PurQ produces an ammonia molecule by converting glutamine to glutamate. PurL transfers the ammonia molecule to FGAR to form FGAM in an ATP-dependent manner. PurS interacts with PurQ and PurL and is thought to assist in the transfer of the ammonia molecule from PurQ to PurL. In Novosphingobium aromaticivorans (strain ATCC 700278 / DSM 12444 / CCUG 56034 / CIP 105152 / NBRC 16084 / F199), this protein is Phosphoribosylformylglycinamidine synthase subunit PurQ.